Here is a 537-residue protein sequence, read N- to C-terminus: CTP synthase (537 aa).

The interval 1-267 (MTKYIFVTGG…DQIVCDHLKL (267 aa)) is amidoligase domain. Residue Ser13 coordinates CTP. Residue Ser13 participates in UTP binding. ATP is bound at residue 14-19 (SIGKGI). Tyr54 serves as a coordination point for L-glutamine. Position 71 (Asp71) interacts with ATP. Mg(2+) is bound by residues Asp71 and Glu141. Residues 148-150 (DIE), 188-193 (KTKPTQ), and Lys224 contribute to the CTP site. Residues 188–193 (KTKPTQ) and Lys224 contribute to the UTP site. ATP is bound at residue 240–242 (RDV). The 244-residue stretch at 292–535 (RIALVGKYVE…VTAAVKNKNQ (244 aa)) folds into the Glutamine amidotransferase type-1 domain. Position 354 (Gly354) interacts with L-glutamine. The active-site Nucleophile; for glutamine hydrolysis is the Cys381. Residues 382–385 (LGMQ), Glu405, and Arg463 each bind L-glutamine. Residues His508 and Glu510 contribute to the active site.

It belongs to the CTP synthase family. In terms of assembly, homotetramer.

The enzyme catalyses UTP + L-glutamine + ATP + H2O = CTP + L-glutamate + ADP + phosphate + 2 H(+). The catalysed reaction is L-glutamine + H2O = L-glutamate + NH4(+). It carries out the reaction UTP + NH4(+) + ATP = CTP + ADP + phosphate + 2 H(+). Its pathway is pyrimidine metabolism; CTP biosynthesis via de novo pathway; CTP from UDP: step 2/2. Allosterically activated by GTP, when glutamine is the substrate; GTP has no effect on the reaction when ammonia is the substrate. The allosteric effector GTP functions by stabilizing the protein conformation that binds the tetrahedral intermediate(s) formed during glutamine hydrolysis. Inhibited by the product CTP, via allosteric rather than competitive inhibition. Functionally, catalyzes the ATP-dependent amination of UTP to CTP with either L-glutamine or ammonia as the source of nitrogen. Regulates intracellular CTP levels through interactions with the four ribonucleotide triphosphates. The polypeptide is CTP synthase (Streptococcus equi subsp. equi (strain 4047)).